A 211-amino-acid polypeptide reads, in one-letter code: Large ribosomal subunit protein uL3 (211 aa).

The tract at residues 125–148 is disordered; sequence GPASHGSKKWHRRPGSIGQRKTPG.

This sequence belongs to the universal ribosomal protein uL3 family. Part of the 50S ribosomal subunit. Forms a cluster with proteins L14 and L19. Also contacts proteins L13 and L17.

Functionally, one of the primary rRNA binding proteins, it binds directly near the 3'-end of the 23S rRNA, where it nucleates assembly of the 50S subunit. This chain is Large ribosomal subunit protein uL3 (rplC), found in Deinococcus radiodurans (strain ATCC 13939 / DSM 20539 / JCM 16871 / CCUG 27074 / LMG 4051 / NBRC 15346 / NCIMB 9279 / VKM B-1422 / R1).